Reading from the N-terminus, the 819-residue chain is Protein SCARECROW (819 aa).

4 disordered regions span residues 6-49 (LFNG…HSER), 65-136 (HNNN…INNN), 212-231 (SQNN…RNNT), and 393-420 (PLST…TTTT). Low complexity predominate over residues 15–33 (TTPDETNNNSTSNSSNIST). The span at 79–98 (RTNNTSSLNCSLPATTQKGV) shows a compositional bias: polar residues. Low complexity predominate over residues 99-136 (TTTTTTTLASSGNNNNNNNNNNNYHYHNNNNNSIINNN). A coiled-coil region spans residues 418–448 (TTTSAELALARKKKEEIKEQKKKDEEGLHLL). The GRAS domain maps to 438-806 (KKKDEEGLHL…LCLLTASAWR (369 aa)). The leucine repeat I (LRI) stretch occupies residues 445–507 (LHLLTLLLQC…RLVSSCLGIY (63 aa)). Residues 452–456 (LQCAE) carry the LxCxE motif motif. Residues 526–591 (FQVFNGISPF…GGPPYVRLTG (66 aa)) are VHIID. The VHIID signature appears at 557–561 (VHIID). The interval 601 to 633 (ATGKRLSDFANKLGLPFEFFPVAEKVGNIDVEK) is leucine repeat II (LRII). A PFYRE region spans residues 642–729 (VAVHWLQHSL…QQLLSREIRN (88 aa)). An SAW region spans residues 732-806 (AVGGPSRSGE…LCLLTASAWR (75 aa)).

The protein belongs to the GRAS family. As to expression, expressed in shoot apical meristem, leaf primordia, between the cortex and the differentiating vessels in lower shoots and in root endodermis.

The protein resides in the nucleus. Putative transcription factor involved in asymmetric cell division. In Pisum sativum (Garden pea), this protein is Protein SCARECROW (SCR).